Here is a 992-residue protein sequence, read N- to C-terminus: Disks large-associated protein 1 (992 aa).

Disordered stretches follow at residues 154-209 and 355-375; these read SLEG…SWWS and KAMGDEDSGDSDTSPKPSPKV. The residue at position 169 (Ser-169) is a Phosphoserine. The span at 195-209 shows a compositional bias: low complexity; it reads SNASNASPTSPSWWS. Residues Ser-362, Ser-365, Ser-368, Ser-372, Ser-389, Ser-418, Ser-421, Ser-425, Ser-428, Ser-437, Ser-509, Ser-516, and Ser-578 each carry the phosphoserine modification. Thr-579 carries the phosphothreonine modification. Residues Ser-581 and Ser-605 each carry the phosphoserine modification. At Thr-606 the chain carries Phosphothreonine. Phosphoserine occurs at positions 608 and 611. 2 interaction with DYL2 regions span residues 665–676 and 687–698; these read LSIGIQVDDAEE and SKFQSVGVQVEE. Residues 914–980 form a disordered region; sequence WKQMDPLDKK…QNSATESAES (67 aa). 2 stretches are compositionally biased toward basic and acidic residues: residues 918–927 and 943–958; these read DPLDKKERRA and IRERSLESSQRQEARK. Ser-947 is modified (phosphoserine). Positions 969 to 978 are enriched in polar residues; that stretch reads VRQNSATESA. A PDZ-binding motif is present at residues 990–992; that stretch reads TRL.

It belongs to the SAPAP family. As to quaternary structure, interacts with guanylate kinase-like domain of DLG1, DLG2, DLG3, DLG4 and AIP1. Interacts with the PDZ domain of SHANK1, SHANK2 and SHANK3. Found in a complex with DLG4 and SHANK1, SHANK2 or SHANK3. Found in a complex with DLG4 and BEGAIN. Interacts with DYL2 and LRFN1. Interacts with MPP2 (via the SH3-Guanylate kinase-like sub-module). Post-translationally, ubiquitinated by TRIM3; leading to proteasomal degradation. In terms of tissue distribution, expressed in brain and testis.

Its subcellular location is the cell membrane. The protein resides in the postsynaptic density. It localises to the synapse. In terms of biological role, part of the postsynaptic scaffold in neuronal cells. This Rattus norvegicus (Rat) protein is Disks large-associated protein 1.